The sequence spans 400 residues: Protein screw (400 aa).

Positions 1-16 are cleaved as a signal peptide; the sequence is MLNVFFLTSLFYAASA. Residues 17–277 constitute a propeptide that is removed on maturation; that stretch reads TTYVTTNNHI…RFKRDLEKRR (261 aa). N-linked (GlcNAc...) asparagine glycosylation is found at Asn-165, Asn-189, Asn-201, Asn-304, and Asn-342. Disulfide bonds link Cys-300-Cys-365, Cys-329-Cys-397, and Cys-333-Cys-399.

Belongs to the TGF-beta family. As to quaternary structure, heterodimers of scw/dpp are the active subunit, dpp/dpp homodimers elicit a basal response and scw/scw homodimers alone are ineffective in specifying a dorsal pattern. Ubiquitously expressed during early stages of embryogenesis, but the effect on development appears graded and is restricted to the dorsal side of the embryo.

The protein localises to the secreted. In terms of biological role, part of the signal that specifies dorsal cell fates in the embryo. Acts together with dpp. The polypeptide is Protein screw (scw) (Drosophila melanogaster (Fruit fly)).